The sequence spans 410 residues: 2-oxoglutarate-dependent dioxygenase AOP3 (410 aa).

The 98-residue stretch at 258-355 (GNASVGAKEA…RYAAALFSYP (98 aa)) folds into the Fe2OG dioxygenase domain. Residues His-278, Asp-280, and His-335 each contribute to the Fe cation site. Arg-346 is a binding site for 2-oxoglutarate.

The protein belongs to the iron/ascorbate-dependent oxidoreductase family. The cofactor is Fe(2+).

Functionally, 2-oxoglutarate-dependent dioxygenase involved in glucosinolates biosynthesis. Catalyzes the conversion of methylsulfinylalkyl glucosinolates to hydroxyalkyl glucosinolates. This is 2-oxoglutarate-dependent dioxygenase AOP3 (AOP3) from Arabidopsis thaliana (Mouse-ear cress).